Reading from the N-terminus, the 412-residue chain is Palmitoyltransferase ZDHHC11 (412 aa).

At 1–42 (MDTRSGSQCSVTPEAILNNEKLVLPPRISRVNGWSLPLHYFQ) the chain is on the cytoplasmic side. Residues 43-63 (VVTWAVFVGLSSATFGIFIPF) form a helical membrane-spanning segment. Residues 64 to 69 (LPHAWK) are Lumenal-facing. Residues 70-90 (YIAYVVTGGIFSFHLVVHLIA) traverse the membrane as a helical segment. At 91 to 176 (SCIDPADSNV…YWFFFSTVAS (86 aa)) the chain is on the cytoplasmic side. The 51-residue stretch at 125–175 (QFCHLCKVTVNKKTKHCISCNKCVSGFDHHCKWINNCVGSRNYWFFFSTVA) folds into the DHHC domain. Cys-155 serves as the catalytic S-palmitoyl cysteine intermediate. Residues 177-197 (ATAGMLCLIAILLYVLVQYLV) traverse the membrane as a helical segment. The Lumenal segment spans residues 198 to 230 (NPGVLRTDPRYEDVKNMNTWLLFLPLFPVQVQT). Positions 198–412 (NPGVLRTDPR…MKTDSAESED (215 aa)) are mediates interaction with IRF3 and STING1. The helical transmembrane segment at 231–251 (LIVVIIGMLVLLLDFLGLVHL) threads the bilayer. Over 252 to 412 (GQLLIFHIYL…MKTDSAESED (161 aa)) the chain is Cytoplasmic. A disordered region spans residues 374-412 (HPDGGSMAQEADDAPSISTLGLQQETTEPMKTDSAESED). Over residues 389–400 (SISTLGLQQETT) the composition is skewed to polar residues. The span at 401–412 (EPMKTDSAESED) shows a compositional bias: basic and acidic residues.

This sequence belongs to the DHHC palmitoyltransferase family. As to quaternary structure, interacts with IRF3 and STING1; in presence of DNA viruses recruits IRF3 to STING1 promoting IRF3 phosphorylation and activation. Expressed in testis.

It is found in the endoplasmic reticulum membrane. The catalysed reaction is L-cysteinyl-[protein] + hexadecanoyl-CoA = S-hexadecanoyl-L-cysteinyl-[protein] + CoA. Its function is as follows. Endoplasmic reticulum-localized palmitoyltransferase that could catalyze the addition of palmitate onto various protein substrates and be involved in a variety of cellular processes. Has a palmitoyltransferase activity toward NCDN and regulates NCDN association with endosome membranes through this palmitoylation. May play a role in cell proliferation. Also has a palmitoyltransferase activity-independent function in DNA virus-triggered and CGAS-mediated innate immune response. Functions as an adapter that recruits IRF3 to STING1 to promote the activation of that key transcriptional regulator of type I interferon (IFN)-dependent immune response. The protein is Palmitoyltransferase ZDHHC11 of Homo sapiens (Human).